The chain runs to 848 residues: Protein SEY1 (848 aa).

The Cytoplasmic portion of the chain corresponds to M1 to Q733. A GB1/RHD3-type G domain is found at G47–Y277. G57 to S64 is a binding site for GTP. The chain crosses the membrane as a helical span at residues V734–I754. Topologically, residues R755–P757 are lumenal. A helical transmembrane segment spans residues F758–L778. Over L779–I848 the chain is Cytoplasmic. Residues L815–I848 form a disordered region. Over residues V829–I848 the composition is skewed to basic and acidic residues.

It belongs to the TRAFAC class dynamin-like GTPase superfamily. GB1/RHD3 GTPase family. RHD3 subfamily.

It localises to the endoplasmic reticulum membrane. Its function is as follows. Cooperates with the reticulon proteins and tubule-shaping DP1 family proteins to generate and maintain the structure of the tubular endoplasmic reticulum network. Has GTPase activity, which is required for its function in ER organization. The polypeptide is Protein SEY1 (Pyricularia oryzae (strain 70-15 / ATCC MYA-4617 / FGSC 8958) (Rice blast fungus)).